The following is a 361-amino-acid chain: Trans-enoyl reductase gkaC (361 aa).

An Enoyl reductase (ER) domain is found at 15–357 (EDVGSFEISR…RREISGKKMV (343 aa)). NADP(+)-binding positions include 48-51 (CDWK), 172-175 (SSAS), 195-198 (SPKN), tyrosine 213, 260-261 (FE), and 351-352 (IS).

Belongs to the zinc-containing alcohol dehydrogenase family. As to quaternary structure, monomer.

It functions in the pathway mycotoxin biosynthesis. Trans-enoyl reductasee; part of the gene cluster that mediates the biosynthesis of GKK1032, fungal natural products containing a macrocyclic para-cyclophane connected to a decahydrofluorene ring system that show potent antitumor activities. Within the pathway, the PKS-NRPS gkaA, with the help of the trans-enoyl reductase gkaC, synthesize the polyketide-tyrosyl acyl thioester product which can be reductively off-loaded by the terminal reductase (R) domain in gkaA. The PKS module of gkaA acts in combination with the trans-acting enoyl reductase gkaC to produce a methylated polyketide attached to the ACP domain. In parallel, the adenylation (A) domain of the NRPS module activated L-tyrosine, which is then transferred to the ACP domain. The condensation (C) domain subsequently links this group to the polyketide chain, forming an enzyme-bound amide. The alpha/beta hydrolase gkaG is then required to catalyze the subsequent Knoevenagel condensation that affords the 3-pyrrolin-2-one ring, whereas the three proteins gkaB, gkadX and gkaZ then function synergistically to form the cyclophane. The protein is Trans-enoyl reductase gkaC of Penicillium citrinum.